Here is a 78-residue protein sequence, read N- to C-terminus: Mandibular organ-inhibiting hormone 2 (78 aa).

3 disulfides stabilise this stretch: Cys-7–Cys-44, Cys-24–Cys-40, and Cys-27–Cys-53.

The protein belongs to the arthropod CHH/MIH/GIH/VIH hormone family. Produced by the medulla terminalis X-organ in the eyestalks and transported to the sinus gland where it is stored and released.

The protein localises to the secreted. Represses the synthesis of methyl farnesoate, the precursor of insect juvenile hormone III in the mandibular organ. This is Mandibular organ-inhibiting hormone 2 from Cancer pagurus (Rock crab).